A 220-amino-acid chain; its full sequence is LOB domain-containing protein 31 (220 aa).

The 103-residue stretch at 10–112 (GPCGACKFLR…AELAYVQTQL (103 aa)) folds into the LOB domain. Residues 117-172 (GLPPPNSQNNSRTEAASSSNVPLISSVDSKDNMSSSSSHIPCMSQQQEQEQPKEAI) form a disordered region. Polar residues predominate over residues 123–139 (SQNNSRTEAASSSNVPL).

Belongs to the LOB domain-containing protein family. Expressed in roots, stems and flowers.

In Arabidopsis thaliana (Mouse-ear cress), this protein is LOB domain-containing protein 31 (LBD31).